A 228-amino-acid chain; its full sequence is Dehydrin Rab25 (228 aa).

Disordered stretches follow at residues 1–68 and 115–228; these read MAEH…EAPH and AGVT…HGHH. 2 stretches are compositionally biased toward basic and acidic residues: residues 169 to 187 and 212 to 228; these read KEKIKEKLPGSHKQEEQKQ and KGIVEKIKEKLPGHGHH.

This sequence belongs to the plant dehydrin family.

This chain is Dehydrin Rab25 (RAB25), found in Oryza sativa subsp. japonica (Rice).